Here is a 387-residue protein sequence, read N- to C-terminus: 3-ketoacyl-CoA thiolase (387 aa).

The active-site Acyl-thioester intermediate is the Cys-91. Active-site proton acceptor residues include His-343 and Cys-373.

The protein belongs to the thiolase-like superfamily. Thiolase family. In terms of assembly, heterotetramer of two alpha chains (FadB) and two beta chains (FadA).

The protein resides in the cytoplasm. It catalyses the reaction an acyl-CoA + acetyl-CoA = a 3-oxoacyl-CoA + CoA. It participates in lipid metabolism; fatty acid beta-oxidation. Its function is as follows. Catalyzes the final step of fatty acid oxidation in which acetyl-CoA is released and the CoA ester of a fatty acid two carbons shorter is formed. The sequence is that of 3-ketoacyl-CoA thiolase from Escherichia fergusonii (strain ATCC 35469 / DSM 13698 / CCUG 18766 / IAM 14443 / JCM 21226 / LMG 7866 / NBRC 102419 / NCTC 12128 / CDC 0568-73).